The chain runs to 341 residues: Hyaluronan and proteoglycan link protein 2 (341 aa).

Positions 1-27 (MPSRIPLPAFCCFLLPWAFTSFHKALG) are cleaved as a signal peptide. The region spanning 35-143 (PHYLLPPIHE…GIEDESVALT (109 aa)) is the Ig-like V-type domain. Intrachain disulfides connect C58–C129, C171–C241, C195–C216, C266–C337, and C291–C312. Link domains are found at residues 149 to 243 (VVFP…FCFT) and 246 to 339 (LAGQ…YCYA).

It belongs to the HAPLN family. As to expression, brain. Predominantly expressed by neurons. Colocalizes with versican V2 in developing and adult cerebellar white matter and at the nodes of Ranvier.

The protein resides in the secreted. Its subcellular location is the extracellular space. It is found in the extracellular matrix. In terms of biological role, mediates a firm binding of versican V2 to hyaluronic acid. May play a pivotal role in the formation of the hyaluronan-associated matrix in the central nervous system (CNS) which facilitates neuronal conduction and general structural stabilization. Binds to hyaluronic acid. This chain is Hyaluronan and proteoglycan link protein 2 (Hapln2), found in Mus musculus (Mouse).